Here is a 211-residue protein sequence, read N- to C-terminus: Large ribosomal subunit protein uL4 (211 aa).

Residues 41 to 53 (QAHSRQGTASTLT) are compositionally biased toward polar residues. The segment at 41-78 (QAHSRQGTASTLTRAEVRGGGRKPYKQKGTGRARQGTI) is disordered. Positions 60–71 (GGRKPYKQKGTG) are enriched in basic residues.

This sequence belongs to the universal ribosomal protein uL4 family. As to quaternary structure, part of the 50S ribosomal subunit.

Its function is as follows. One of the primary rRNA binding proteins, this protein initially binds near the 5'-end of the 23S rRNA. It is important during the early stages of 50S assembly. It makes multiple contacts with different domains of the 23S rRNA in the assembled 50S subunit and ribosome. Functionally, forms part of the polypeptide exit tunnel. This is Large ribosomal subunit protein uL4 from Prochlorococcus marinus (strain MIT 9303).